The primary structure comprises 130 residues: Histone H2A type 1-C (130 aa).

Positions 1–22 (MSGRGKQGGKARAKAKSRSSRA) are disordered. An N-acetylserine modification is found at Ser-2. Ser-2 is subject to Phosphoserine; by RPS6KA5. The residue at position 4 (Arg-4) is a Citrulline; alternate. A Symmetric dimethylarginine; by PRMT5; alternate modification is found at Arg-4. Lys-6 and Lys-10 each carry N6-(2-hydroxyisobutyryl)lysine; alternate. Lys-6 bears the N6-acetyllysine; alternate mark. Residues 7-19 (QGGKARAKAKSRS) are compositionally biased toward basic residues. Lys-10 and Lys-14 each carry N6-(beta-hydroxybutyryl)lysine; alternate. Lys-10 bears the N6-lactoyllysine; alternate mark. Lys-10 carries the post-translational modification N6-succinyllysine; alternate. A Glycyl lysine isopeptide (Lys-Gly) (interchain with G-Cter in ubiquitin); alternate cross-link involves residue Lys-14. A Glycyl lysine isopeptide (Lys-Gly) (interchain with G-Cter in ubiquitin) cross-link involves residue Lys-16. Lys-37 carries the N6-(2-hydroxyisobutyryl)lysine; alternate modification. At Lys-37 the chain carries N6-(beta-hydroxybutyryl)lysine; alternate. Lys-37 carries the N6-crotonyllysine; alternate modification. N6-(2-hydroxyisobutyryl)lysine is present on residues Lys-75 and Lys-76. Lys-96 is modified (N6-(2-hydroxyisobutyryl)lysine; alternate). Lys-96 is modified (N6-(beta-hydroxybutyryl)lysine; alternate). Position 96 is an N6-succinyllysine; alternate (Lys-96). At Lys-96 the chain carries N6-glutaryllysine; alternate. Gln-105 is subject to N5-methylglutamine. Lys-119 is subject to N6-(2-hydroxyisobutyryl)lysine; alternate. Lys-119 bears the N6-(beta-hydroxybutyryl)lysine; alternate mark. N6-crotonyllysine; alternate is present on residues Lys-119 and Lys-120. 2 positions are modified to N6-glutaryllysine; alternate: Lys-119 and Lys-120. Residue Lys-120 forms a Glycyl lysine isopeptide (Lys-Gly) (interchain with G-Cter in ubiquitin); alternate linkage. A Phosphothreonine; by DCAF1 modification is found at Thr-121. The residue at position 126 (Lys-126) is an N6-crotonyllysine; alternate. Lys-126 is subject to N6-glutaryllysine; alternate.

It belongs to the histone H2A family. As to quaternary structure, the nucleosome is a histone octamer containing two molecules each of H2A, H2B, H3 and H4 assembled in one H3-H4 heterotetramer and two H2A-H2B heterodimers. The octamer wraps approximately 147 bp of DNA. Deiminated on Arg-4 in granulocytes upon calcium entry. In terms of processing, monoubiquitination of Lys-120 (H2AK119Ub) by RING1, TRIM37 and RNF2/RING2 complex gives a specific tag for epigenetic transcriptional repression and participates in X chromosome inactivation of female mammals. It is involved in the initiation of both imprinted and random X inactivation. Ubiquitinated H2A is enriched in inactive X chromosome chromatin. Ubiquitination of H2A functions downstream of methylation of 'Lys-27' of histone H3 (H3K27me). H2AK119Ub by RNF2/RING2 can also be induced by ultraviolet and may be involved in DNA repair. Monoubiquitination of Lys-120 (H2AK119Ub) by TRIM37 may promote transformation of cells in a number of breast cancers. Following DNA double-strand breaks (DSBs), it is ubiquitinated through 'Lys-63' linkage of ubiquitin moieties by the E2 ligase UBE2N and the E3 ligases RNF8 and RNF168, leading to the recruitment of repair proteins to sites of DNA damage. Ubiquitination at Lys-14 and Lys-16 (H2AK13Ub and H2AK15Ub, respectively) in response to DNA damage is initiated by RNF168 that mediates monoubiquitination at these 2 sites, and 'Lys-63'-linked ubiquitin are then conjugated to monoubiquitin; RNF8 is able to extend 'Lys-63'-linked ubiquitin chains in vitro. Deubiquitinated by USP51 at Lys-14 and Lys-16 (H2AK13Ub and H2AK15Ub, respectively) after damaged DNA is repaired. H2AK119Ub and ionizing radiation-induced 'Lys-63'-linked ubiquitination (H2AK13Ub and H2AK15Ub) are distinct events. Post-translationally, phosphorylation on Ser-2 (H2AS1ph) is enhanced during mitosis. Phosphorylation on Ser-2 by RPS6KA5/MSK1 directly represses transcription. Acetylation of H3 inhibits Ser-2 phosphorylation by RPS6KA5/MSK1. Phosphorylation at Thr-121 (H2AT120ph) by DCAF1 is present in the regulatory region of many tumor suppresor genes and down-regulates their transcription. Glutamine methylation at Gln-105 (H2AQ104me) by FBL is specifically dedicated to polymerase I. It is present at 35S ribosomal DNA locus and impairs binding of the FACT complex. In terms of processing, symmetric dimethylation on Arg-4 by the PRDM1/PRMT5 complex may play a crucial role in the germ-cell lineage. Post-translationally, crotonylation (Kcr) is specifically present in male germ cells and marks testis-specific genes in post-meiotic cells, including X-linked genes that escape sex chromosome inactivation in haploid cells. Crotonylation marks active promoters and enhancers and confers resistance to transcriptional repressors. It is also associated with post-meiotically activated genes on autosomes. Lactylated in macrophages by EP300/P300 by using lactoyl-CoA directly derived from endogenous or exogenous lactate, leading to stimulates gene transcription.

Its subcellular location is the nucleus. The protein localises to the chromosome. Core component of nucleosome. Nucleosomes wrap and compact DNA into chromatin, limiting DNA accessibility to the cellular machineries which require DNA as a template. Histones thereby play a central role in transcription regulation, DNA repair, DNA replication and chromosomal stability. DNA accessibility is regulated via a complex set of post-translational modifications of histones, also called histone code, and nucleosome remodeling. The chain is Histone H2A type 1-C from Homo sapiens (Human).